A 364-amino-acid chain; its full sequence is Polygalacturonase (364 aa).

A signal peptide spans 1–21 (MVAYALTSMLLSAGALVAAAP). The propeptide occupies 22-27 (SGLDAR). Cys30 and Cys45 form a disulfide bridge. PbH1 repeat units follow at residues 158 to 188 (VTGL…DIGS), 189 to 210 (SSGI…AINS), 211 to 231 (GSDI…SIGS), 240 to 261 (VKGV…RIKT), 269 to 291 (VSDI…VIEQ), and 303 to 348 (TTGV…SITG). The Proton donor role is filled by Asp203. Cys205 and Cys221 are disulfide-bonded. Residue His225 is part of the active site. Asn276 carries N-linked (GlcNAc...) asparagine glycosylation. A disulfide bond links Cys331 and Cys336. N-linked (GlcNAc...) asparagine glycosylation occurs at Asn340. Cys355 and Cys364 form a disulfide bridge.

The protein belongs to the glycosyl hydrolase 28 family.

The protein localises to the secreted. The catalysed reaction is (1,4-alpha-D-galacturonosyl)n+m + H2O = (1,4-alpha-D-galacturonosyl)n + (1,4-alpha-D-galacturonosyl)m.. Its function is as follows. Involved in maceration and soft-rotting of plant tissue. Hydrolyzes the 1,4-alpha glycosidic bonds of de-esterified pectate in the smooth region of the plant cell wall. In Cochliobolus carbonum (Maize leaf spot fungus), this protein is Polygalacturonase (PGN1).